Reading from the N-terminus, the 331-residue chain is Beta-ketoacyl-[acyl-carrier-protein] synthase III (331 aa).

Catalysis depends on residues C113 and H253. The tract at residues 254 to 258 (QANTR) is ACP-binding. The active site involves N283.

Belongs to the thiolase-like superfamily. FabH family. As to quaternary structure, homodimer.

Its subcellular location is the cytoplasm. The catalysed reaction is malonyl-[ACP] + acetyl-CoA + H(+) = 3-oxobutanoyl-[ACP] + CO2 + CoA. The protein operates within lipid metabolism; fatty acid biosynthesis. Catalyzes the condensation reaction of fatty acid synthesis by the addition to an acyl acceptor of two carbons from malonyl-ACP. Catalyzes the first condensation reaction which initiates fatty acid synthesis and may therefore play a role in governing the total rate of fatty acid production. Possesses both acetoacetyl-ACP synthase and acetyl transacylase activities. Its substrate specificity determines the biosynthesis of branched-chain and/or straight-chain of fatty acids. This is Beta-ketoacyl-[acyl-carrier-protein] synthase III from Desulfitobacterium hafniense (strain DSM 10664 / DCB-2).